Consider the following 185-residue polypeptide: CASP-like protein 2C2 (185 aa).

Residues 1-22 lie on the Cytoplasmic side of the membrane; that stretch reads MAAAARVSEVKAEGLLRGACTA. A helical transmembrane segment spans residues 23 to 43; it reads LAAAAALLVGLSTQTETVLLV. At 44–53 the chain is on the extracellular side; sequence RKKATVKDVQ. The chain crosses the membrane as a helical span at residues 54–74; that stretch reads ALWVLAMAAAAAAGYHLLQLL. Over 75 to 104 the chain is Cytoplasmic; that stretch reads KCLYLGRVGGARPCRRSSRALAWTCLLLDK. Residues 105-125 traverse the membrane as a helical segment; the sequence is ACAYTTFATTVAAAQACVVAL. Residues 126-146 are Extracellular-facing; the sequence is DGAHALQWTKLCNIYTRFCEQ. Residues 147–167 form a helical membrane-spanning segment; it reads VAGSLVLGMLAAVGTAVLSAA. The Cytoplasmic portion of the chain corresponds to 168 to 185; the sequence is SARNVFRHYASLETYAAH.

Belongs to the Casparian strip membrane proteins (CASP) family. As to quaternary structure, homodimer and heterodimers.

The protein resides in the cell membrane. This Zea mays (Maize) protein is CASP-like protein 2C2.